The chain runs to 169 residues: ATP synthase subunit b (169 aa).

The chain crosses the membrane as a helical span at residues 11–31; it reads IPSFIAQIVNFGLLLGLLYLF.

It belongs to the ATPase B chain family. As to quaternary structure, F-type ATPases have 2 components, F(1) - the catalytic core - and F(0) - the membrane proton channel. F(1) has five subunits: alpha(3), beta(3), gamma(1), delta(1), epsilon(1). F(0) has three main subunits: a(1), b(2) and c(10-14). The alpha and beta chains form an alternating ring which encloses part of the gamma chain. F(1) is attached to F(0) by a central stalk formed by the gamma and epsilon chains, while a peripheral stalk is formed by the delta and b chains.

It is found in the cell membrane. F(1)F(0) ATP synthase produces ATP from ADP in the presence of a proton or sodium gradient. F-type ATPases consist of two structural domains, F(1) containing the extramembraneous catalytic core and F(0) containing the membrane proton channel, linked together by a central stalk and a peripheral stalk. During catalysis, ATP synthesis in the catalytic domain of F(1) is coupled via a rotary mechanism of the central stalk subunits to proton translocation. Its function is as follows. Component of the F(0) channel, it forms part of the peripheral stalk, linking F(1) to F(0). The chain is ATP synthase subunit b from Dehalococcoides mccartyi (strain ATCC BAA-2100 / JCM 16839 / KCTC 5957 / BAV1).